We begin with the raw amino-acid sequence, 837 residues long: DNA primase (837 aa).

Residues C782–C821 form a CHC2-type zinc finger.

This sequence belongs to the herpesviridae DNA primase family. Associates with the helicase and the primase-associated factor to form the helicase-primase factor.

Its subcellular location is the host nucleus. Essential component of the helicase/primase complex. Unwinds the DNA at the replication forks and generates single-stranded DNA for both leading and lagging strand synthesis. The primase initiates primer synthesis and thereby produces large amount of short RNA primers on the lagging strand that the polymerase elongates using dNTPs. The polypeptide is DNA primase (56) (Connochaetes taurinus (Blue wildebeest)).